We begin with the raw amino-acid sequence, 201 residues long: uncharacterized protein (201 aa).

A signal peptide spans 1–25; the sequence is MYRAGVTLLVVAVVSLGRWDVVTMA. Residues 26–170 lie on the Extracellular side of the membrane; it reads AAIGIGWYEP…AYFRRSNHRA (145 aa). N-linked (GlcNAc...) asparagine; by host glycosylation is found at Asn-46, Asn-49, Asn-55, Asn-84, Asn-95, Asn-113, Asn-122, Asn-137, and Asn-144. The chain crosses the membrane as a helical span at residues 171-191; that stretch reads FMIVILTQVVFVVFIINASFI. Over 192 to 201 the chain is Cytoplasmic; that stretch reads WSWTFRRHKR.

Belongs to the HHV-5 UL120 protein family.

It is found in the host membrane. This is an uncharacterized protein from Homo sapiens (Human).